Reading from the N-terminus, the 315-residue chain is Methionyl-tRNA formyltransferase (315 aa).

Residue 113 to 116 (SLLP) participates in (6S)-5,6,7,8-tetrahydrofolate binding.

It belongs to the Fmt family.

The catalysed reaction is L-methionyl-tRNA(fMet) + (6R)-10-formyltetrahydrofolate = N-formyl-L-methionyl-tRNA(fMet) + (6S)-5,6,7,8-tetrahydrofolate + H(+). In terms of biological role, attaches a formyl group to the free amino group of methionyl-tRNA(fMet). The formyl group appears to play a dual role in the initiator identity of N-formylmethionyl-tRNA by promoting its recognition by IF2 and preventing the misappropriation of this tRNA by the elongation apparatus. The sequence is that of Methionyl-tRNA formyltransferase from Escherichia coli O127:H6 (strain E2348/69 / EPEC).